The following is a 123-amino-acid chain: Small ribosomal subunit protein uS12c (123 aa).

This sequence belongs to the universal ribosomal protein uS12 family. Part of the 30S ribosomal subunit.

Its subcellular location is the plastid. The protein resides in the chloroplast. Its function is as follows. With S4 and S5 plays an important role in translational accuracy. Located at the interface of the 30S and 50S subunits. This is Small ribosomal subunit protein uS12c (rps12) from Chlorokybus atmophyticus (Soil alga).